Here is a 364-residue protein sequence, read N- to C-terminus: DNA replication and repair protein RecF (364 aa).

30-37 contacts ATP; the sequence is GKNAQGKT.

This sequence belongs to the RecF family.

The protein resides in the cytoplasm. The RecF protein is involved in DNA metabolism; it is required for DNA replication and normal SOS inducibility. RecF binds preferentially to single-stranded, linear DNA. It also seems to bind ATP. The chain is DNA replication and repair protein RecF from Geotalea uraniireducens (strain Rf4) (Geobacter uraniireducens).